The following is a 195-amino-acid chain: Pyridoxal 5'-phosphate synthase subunit PdxT (195 aa).

55 to 57 (GES) contributes to the L-glutamine binding site. Cysteine 84 acts as the Nucleophile in catalysis. Residues arginine 111 and 139–140 (IR) each bind L-glutamine. Active-site charge relay system residues include histidine 175 and glutamate 177.

It belongs to the glutaminase PdxT/SNO family. In the presence of PdxS, forms a dodecamer of heterodimers. Only shows activity in the heterodimer.

The catalysed reaction is aldehydo-D-ribose 5-phosphate + D-glyceraldehyde 3-phosphate + L-glutamine = pyridoxal 5'-phosphate + L-glutamate + phosphate + 3 H2O + H(+). It carries out the reaction L-glutamine + H2O = L-glutamate + NH4(+). Its pathway is cofactor biosynthesis; pyridoxal 5'-phosphate biosynthesis. Functionally, catalyzes the hydrolysis of glutamine to glutamate and ammonia as part of the biosynthesis of pyridoxal 5'-phosphate. The resulting ammonia molecule is channeled to the active site of PdxS. This Methanosphaerula palustris (strain ATCC BAA-1556 / DSM 19958 / E1-9c) protein is Pyridoxal 5'-phosphate synthase subunit PdxT.